The primary structure comprises 796 residues: Cadherin-11 (796 aa).

The N-terminal stretch at 1-24 (MKENYCLQAALVCLSMLYHSQAFA) is a signal peptide. Residues 25–53 (LERRSHLHPSFHGHHEKGKEGQVLQRSKR) constitute a propeptide that is removed on maturation. Cadherin domains lie at 54-159 (GWVW…PPEF), 160-268 (LHEI…PPKF), 269-383 (PQSV…PPMF), 384-486 (LAPS…DNAP), and 487-612 (KFAA…YILN). Residues 54–617 (GWVWNQFFVI…AYILNAGLST (564 aa)) lie on the Extracellular side of the membrane. 2 N-linked (GlcNAc...) asparagine glycosylation sites follow: N455 and N540. Residues 618–640 (GALIAILACIVILLVIVVLFVTL) form a helical membrane-spanning segment. At 641 to 796 (RRQKKEPLIV…GSKDTFDDDS (156 aa)) the chain is on the cytoplasmic side. Phosphoserine is present on S788. Phosphothreonine is present on T791.

In terms of assembly, interacts with PCDH8. Selectively expressed in osteoblastic cell lines, precursor cell lines of osteoblasts, and primary osteoblastic cells from calvaria, as well as in lung, testis, and brain tissues at low levels.

It is found in the cell membrane. Functionally, cadherins are calcium-dependent cell adhesion proteins. They preferentially interact with themselves in a homophilic manner in connecting cells; cadherins may thus contribute to the sorting of heterogeneous cell types. Required for proper focal adhesion assembly. Involved in the regulation of cell migration. This is Cadherin-11 (Cdh11) from Mus musculus (Mouse).